Here is a 203-residue protein sequence, read N- to C-terminus: Urease accessory protein UreG (203 aa).

Residue 11 to 18 (GPVGSGKT) coordinates GTP.

It belongs to the SIMIBI class G3E GTPase family. UreG subfamily. Homodimer. UreD, UreF and UreG form a complex that acts as a GTP-hydrolysis-dependent molecular chaperone, activating the urease apoprotein by helping to assemble the nickel containing metallocenter of UreC. The UreE protein probably delivers the nickel.

Its subcellular location is the cytoplasm. Functionally, facilitates the functional incorporation of the urease nickel metallocenter. This process requires GTP hydrolysis, probably effectuated by UreG. The chain is Urease accessory protein UreG from Prochlorococcus marinus (strain MIT 9215).